The sequence spans 260 residues: Diphthine synthase (260 aa).

Residues L9, D85, I88, 113 to 114 (TA), L168, A202, and H227 each bind S-adenosyl-L-methionine.

It belongs to the diphthine synthase family. As to quaternary structure, homodimer.

The catalysed reaction is 2-[(3S)-amino-3-carboxypropyl]-L-histidyl-[translation elongation factor 2] + 3 S-adenosyl-L-methionine = diphthine-[translation elongation factor 2] + 3 S-adenosyl-L-homocysteine + 3 H(+). The protein operates within protein modification; peptidyl-diphthamide biosynthesis. Functionally, S-adenosyl-L-methionine-dependent methyltransferase that catalyzes the trimethylation of the amino group of the modified target histidine residue in translation elongation factor 2 (EF-2), to form an intermediate called diphthine. The three successive methylation reactions represent the second step of diphthamide biosynthesis. The polypeptide is Diphthine synthase (Haloquadratum walsbyi (strain DSM 16790 / HBSQ001)).